The sequence spans 678 residues: Macrolide export ATP-binding/permease protein MacB 1 (678 aa).

Residues 11 to 249 form the ABC transporter domain; that stretch reads LRLENVSREF…PKMVDIPSVI (239 aa). An ATP-binding site is contributed by 47–54; the sequence is GTSGSGKS. 4 helical membrane-spanning segments follow: residues 303–323, 558–578, 608–628, and 641–661; these read ALTM…VALG, IAVI…LVSV, LVCL…GLLF, and AASI…FGFF.

Belongs to the ABC transporter superfamily. Macrolide exporter (TC 3.A.1.122) family. Homodimer. Part of the tripartite efflux system MacAB-TolC, which is composed of an inner membrane transporter, MacB, a periplasmic membrane fusion protein, MacA, and an outer membrane component, TolC. The complex forms a large protein conduit and can translocate molecules across both the inner and outer membranes. Interacts with MacA.

It is found in the cell inner membrane. Its function is as follows. Part of the tripartite efflux system MacAB-TolC. MacB is a non-canonical ABC transporter that contains transmembrane domains (TMD), which form a pore in the inner membrane, and an ATP-binding domain (NBD), which is responsible for energy generation. Confers resistance against macrolides. This chain is Macrolide export ATP-binding/permease protein MacB 1, found in Yersinia pestis bv. Antiqua (strain Nepal516).